The sequence spans 84 residues: Large ribosomal subunit protein bL27 (84 aa).

The disordered stretch occupies residues 1 to 22 (MAHKKAGGSTRNGRDSESKRLG).

Belongs to the bacterial ribosomal protein bL27 family.

The protein is Large ribosomal subunit protein bL27 of Shewanella sp. (strain MR-4).